The following is a 99-amino-acid chain: UPF0125 protein PM0166 (99 aa).

Belongs to the UPF0125 (RnfH) family.

The polypeptide is UPF0125 protein PM0166 (Pasteurella multocida (strain Pm70)).